Consider the following 354-residue polypeptide: Elongation factor Ts, mitochondrial (354 aa).

Residues 1-47 constitute a mitochondrion transit peptide; it reads MMRSTLSLLQKCRLPNNNGSLLSFKNNQVVNQTALFSMKSNQQYRFY.

It belongs to the EF-Ts family.

It is found in the mitochondrion. Its function is as follows. Associates with the EF-Tu.GDP complex and induces the exchange of GDP to GTP. It remains bound to the aminoacyl-tRNA.EF-Tu.GTP complex up to the GTP hydrolysis stage on the ribosome. In Heterostelium pallidum (strain ATCC 26659 / Pp 5 / PN500) (Cellular slime mold), this protein is Elongation factor Ts, mitochondrial (tsfm).